Consider the following 188-residue polypeptide: Small ribosomal subunit protein uS12m (188 aa).

A mitochondrion-targeting transit peptide spans 1 to 63 (MSGGRWISNL…AAFRLPQSSG (63 aa)).

It belongs to the universal ribosomal protein uS12 family.

The protein localises to the mitochondrion. Its function is as follows. Protein S12 is involved in the translation initiation step. In Oenothera elata subsp. hookeri (Hooker's evening primrose), this protein is Small ribosomal subunit protein uS12m (RPS12).